Here is a 572-residue protein sequence, read N- to C-terminus: DBH-like monooxygenase protein 2 homolog (572 aa).

A signal peptide spans 1–26; sequence MGTCLKGNMSVLSLVLFLLSVQQFWA. N-linked (GlcNAc...) asparagine glycans are attached at residues Asn8, Asn64, Asn187, and Asn203. At 27-552 the chain is on the extracellular side; that stretch reads QEDPLLPFSE…SPPEPCVRAC (526 aa). The DOMON domain occupies 42 to 157; that stretch reads HNVQLKWGFD…LPMKLIYAYG (116 aa). Tyr207 is an active-site residue. Disulfide bonds link Cys209-Cys256 and Cys244-Cys263. Cu cation is bound by residues His237 and His238. His301 is a binding site for Cu cation. Asn306 carries N-linked (GlcNAc...) asparagine glycosylation. 2 disulfide bridges follow: Cys358-Cys472 and Cys435-Cys457. Residue His381 is part of the active site. Cu cation contacts are provided by His381, His383, and Met456. Asn468, Asn503, Asn518, and Asn534 each carry an N-linked (GlcNAc...) asparagine glycan. The chain crosses the membrane as a helical span at residues 553–571; it reads ATKNLAFMSLFLCLAGMWA. Ser572 is a topological domain (cytoplasmic).

Belongs to the copper type II ascorbate-dependent monooxygenase family. It depends on Cu(2+) as a cofactor.

The protein localises to the membrane. The polypeptide is DBH-like monooxygenase protein 2 homolog (moxd2) (Danio rerio (Zebrafish)).